The chain runs to 236 residues: MNQDQLKKMVGDAARDEVLKLPAGQILGVGTGSTANCFIDALAPHKDHFAGTVSSSNATTERLLKHGFKVLDPNDVVSLPAYVDGADEIDPQGHMIKGGGGALTREKIIASMAQQFICICDSSKQVPVLGNFALPVEIIPLAKGVVTRELEKLGGKVTLRLAKSTRADLNQTPSEPFVTDNGGWILDIAGLQIADPLKIESQINQIAGVITVGLFAKEKANILLVSNAAGVDRIVL.

Residues 31–34 (TGST), 84–87 (DGAD), and 97–100 (KGGG) each bind substrate. Glutamate 106 functions as the Proton acceptor in the catalytic mechanism. Position 124 (lysine 124) interacts with substrate.

Belongs to the ribose 5-phosphate isomerase family. As to quaternary structure, homodimer.

It carries out the reaction aldehydo-D-ribose 5-phosphate = D-ribulose 5-phosphate. The protein operates within carbohydrate degradation; pentose phosphate pathway; D-ribose 5-phosphate from D-ribulose 5-phosphate (non-oxidative stage): step 1/1. In terms of biological role, catalyzes the reversible conversion of ribose-5-phosphate to ribulose 5-phosphate. The sequence is that of Ribose-5-phosphate isomerase A from Polynucleobacter asymbioticus (strain DSM 18221 / CIP 109841 / QLW-P1DMWA-1) (Polynucleobacter necessarius subsp. asymbioticus).